The sequence spans 467 residues: UDP-N-acetylmuramate--L-alanine ligase (467 aa).

ATP is bound at residue 114-120; it reads GTHGKTT.

This sequence belongs to the MurCDEF family.

It localises to the cytoplasm. The catalysed reaction is UDP-N-acetyl-alpha-D-muramate + L-alanine + ATP = UDP-N-acetyl-alpha-D-muramoyl-L-alanine + ADP + phosphate + H(+). It functions in the pathway cell wall biogenesis; peptidoglycan biosynthesis. Cell wall formation. This chain is UDP-N-acetylmuramate--L-alanine ligase, found in Bradyrhizobium diazoefficiens (strain JCM 10833 / BCRC 13528 / IAM 13628 / NBRC 14792 / USDA 110).